Reading from the N-terminus, the 341-residue chain is L-threonine 3-dehydrogenase (341 aa).

Zn(2+) is bound at residue cysteine 38. Catalysis depends on charge relay system residues threonine 40 and histidine 43. Zn(2+) is bound by residues histidine 63, glutamate 64, cysteine 93, cysteine 96, cysteine 99, and cysteine 107. NAD(+) is bound by residues isoleucine 175, aspartate 195, arginine 200, 262 to 264, and 286 to 287; these read LGI and IY.

Belongs to the zinc-containing alcohol dehydrogenase family. Homotetramer. It depends on Zn(2+) as a cofactor.

It is found in the cytoplasm. It carries out the reaction L-threonine + NAD(+) = (2S)-2-amino-3-oxobutanoate + NADH + H(+). It functions in the pathway amino-acid degradation; L-threonine degradation via oxydo-reductase pathway; glycine from L-threonine: step 1/2. Its function is as follows. Catalyzes the NAD(+)-dependent oxidation of L-threonine to 2-amino-3-ketobutyrate. The sequence is that of L-threonine 3-dehydrogenase from Escherichia coli O17:K52:H18 (strain UMN026 / ExPEC).